The following is a 136-amino-acid chain: Protein NrdI (136 aa).

It belongs to the NrdI family.

Its function is as follows. Probably involved in ribonucleotide reductase function. In Escherichia coli O1:K1 / APEC, this protein is Protein NrdI.